Here is a 160-residue protein sequence, read N- to C-terminus: Nucleotide-binding protein Tgr7_1196 (160 aa).

This sequence belongs to the YajQ family.

Its function is as follows. Nucleotide-binding protein. The protein is Nucleotide-binding protein Tgr7_1196 of Thioalkalivibrio sulfidiphilus (strain HL-EbGR7).